The primary structure comprises 847 residues: Guanine nucleotide exchange factor VAV3 (847 aa).

Positions 1–119 (MEPWKQCAQW…ETLSRLSRTP (119 aa)) constitute a Calponin-homology (CH) domain. Position 141 is a phosphotyrosine (Tyr-141). The DH domain maps to 192–371 (IRSCCLAEIK…KDLAQYVNEV (180 aa)). The 103-residue stretch at 400–502 (RPQGDGEIRI…WLEQFEMALS (103 aa)) folds into the PH domain. The segment at 513-562 (FHDFKMHTFTRVTSCKVCQMLLRGTFYQGYLCFKCGARAHKECLGRVDNC) adopts a Phorbol-ester/DAG-type zinc-finger fold. The interval 560–847 (DNCGRVNSGE…FPSTYVEEDE (288 aa)) is sufficient for interaction with ROS1. Residues 592–660 (PGLPKMQVIR…PSDAVKPCPC (69 aa)) form the SH3 1 domain. The 95-residue stretch at 672 to 766 (WYAGAMERLQ…TLDTTLQFPY (95 aa)) folds into the SH2 domain. The 60-residue stretch at 788 to 847 (KVLGIAIARYDFCARDMRELSLLKGDVVKIYTKMSANGWWRGEVNGRVGWFPSTYVEEDE) folds into the SH3 2 domain.

Interacts with the PH domain of SH2B2. Interacts (via SH2 domains) with the phosphorylated form of EPHA2. Interacts with ROS1; constitutive interaction that mediates VAV3 phosphorylation. Post-translationally, phosphorylated. Phosphorylation can be mediated by ROS1. In osteoclasts, undergoes tyrosine phosphorylation in response to CSF1. As to expression, isoform 1 and isoform 3 are widely expressed; both are expressed at very low levels in skeletal muscle. In keratinocytes, isoform 1 is less abundant than isoform 3. Isoform 3 is detected at very low levels, if any, in adrenal gland, bone marrow, spleen, fetal brain and spinal cord; in these tissues, isoform 1 is readily detectable.

Functionally, exchange factor for GTP-binding proteins RhoA, RhoG and, to a lesser extent, Rac1. Binds physically to the nucleotide-free states of those GTPases. Plays an important role in angiogenesis. Its recruitment by phosphorylated EPHA2 is critical for EFNA1-induced RAC1 GTPase activation and vascular endothelial cell migration and assembly. May be important for integrin-mediated signaling, at least in some cell types. In osteoclasts, along with SYK tyrosine kinase, required for signaling through integrin alpha-v/beta-1 (ITAGV-ITGB1), a crucial event for osteoclast proper cytoskeleton organization and function. This signaling pathway involves RAC1, but not RHO, activation. Necessary for proper wound healing. In the course of wound healing, required for the phagocytotic cup formation preceding macrophage phagocytosis of apoptotic neutrophils. Responsible for integrin beta-2 (ITGB2)-mediated macrophage adhesion and, to a lesser extent, contributes to beta-3 (ITGB3)-mediated adhesion. Does not affect integrin beta-1 (ITGB1)-mediated adhesion. The polypeptide is Guanine nucleotide exchange factor VAV3 (VAV3) (Homo sapiens (Human)).